Reading from the N-terminus, the 1486-residue chain is Chromosome partition protein MukB (1486 aa).

An ATP-binding site is contributed by 34 to 41 (GGNGAGKS). Coiled-coil stretches lie at residues 326–418 (LEAD…QYNQ), 444–480 (LETF…QAYQ), and 509–603 (RHLA…RAPV). The interval 666–783 (PGGSEDQRLN…EVPLFGRAAR (118 aa)) is flexible hinge. Coiled coils occupy residues 835–923 (EAEI…AKLE), 977–1115 (EMLS…TAKA), and 1209–1266 (VEAI…QNVS).

Belongs to the SMC family. MukB subfamily. As to quaternary structure, homodimerization via its hinge domain. Binds to DNA via its C-terminal region. Interacts, and probably forms a ternary complex, with MukE and MukF via its C-terminal region. The complex formation is stimulated by calcium or magnesium. Interacts with tubulin-related protein FtsZ.

It localises to the cytoplasm. The protein resides in the nucleoid. Its function is as follows. Plays a central role in chromosome condensation, segregation and cell cycle progression. Functions as a homodimer, which is essential for chromosome partition. Involved in negative DNA supercoiling in vivo, and by this means organize and compact chromosomes. May achieve or facilitate chromosome segregation by condensation DNA from both sides of a centrally located replisome during cell division. The sequence is that of Chromosome partition protein MukB from Shigella boydii serotype 4 (strain Sb227).